The sequence spans 23 residues: NADH-ubiquinone oxidoreductase 29 kDa subunit (23 aa).

Complex I is composed of about 45 different subunits.

Its subcellular location is the mitochondrion inner membrane. It catalyses the reaction a ubiquinone + NADH + 5 H(+)(in) = a ubiquinol + NAD(+) + 4 H(+)(out). Transfer of electrons from NADH to the respiratory chain. The immediate electron acceptor for the enzyme is believed to be ubiquinone. In Solanum tuberosum (Potato), this protein is NADH-ubiquinone oxidoreductase 29 kDa subunit.